The primary structure comprises 328 residues: Purple acid phosphatase 7 (328 aa).

Residues 1–24 form the signal peptide; the sequence is MKMHVCFSVILMFLSIFFINGALS. Asp-48 lines the Fe cation pocket. Residue Asn-56 is glycosylated (N-linked (GlcNAc...) asparagine). Residues Asp-81 and Tyr-84 each contribute to the Fe cation site. Asp-81 contacts Zn(2+). The Zn(2+) site is built by Asn-119 and His-213. His-222 serves as the catalytic Proton donor. His-248 provides a ligand contact to Zn(2+). Substrate is bound at residue 248–250; the sequence is HDH. His-250 is a Fe cation binding site.

It belongs to the metallophosphoesterase superfamily. Purple acid phosphatase family. In terms of assembly, homodimer. Fe cation is required as a cofactor. The cofactor is Zn(2+). In terms of tissue distribution, expressed in roots, stems, leaves, flowers and siliques.

The protein resides in the secreted. It carries out the reaction a phosphate monoester + H2O = an alcohol + phosphate. The chain is Purple acid phosphatase 7 (PAP7) from Arabidopsis thaliana (Mouse-ear cress).